Reading from the N-terminus, the 670-residue chain is uncharacterized protein (670 aa).

This is an uncharacterized protein from Ictalurid herpesvirus 1 (strain Auburn) (IcHV-1).